The following is a 233-amino-acid chain: Phycoerythrobilin synthase (233 aa).

The protein belongs to the HY2 family.

It catalyses the reaction (3Z)-phycoerythrobilin + 2 oxidized 2[4Fe-4S]-[ferredoxin] = biliverdin IXalpha + 2 reduced 2[4Fe-4S]-[ferredoxin] + 4 H(+). Functionally, plays a role in phycoerythrobilin biosynthesis, the red pigment chromophore photosynthetically active biliproteins of the host cyanobacteria. Uses a four-electron reduction to carry out the reactions catalyzed by two enzymes (EC 1.3.7.2 and EC 1.3.7.3) in host. The polypeptide is Phycoerythrobilin synthase (pebS) (Prochlorococcus).